The following is a 248-amino-acid chain: NADP-dependent 3-hydroxy acid dehydrogenase YdfG (248 aa).

NADP(+) is bound by residues 7-12 (GATAGF), 32-33 (RR), 54-55 (DV), and Asn-81. Ser-134 lines the substrate pocket. NADP(+)-binding positions include Tyr-147, Lys-151, and 177 to 185 (PGLVGGTEF). Tyr-147 acts as the Proton acceptor in catalysis.

This sequence belongs to the short-chain dehydrogenases/reductases (SDR) family. As to quaternary structure, homotetramer.

It carries out the reaction 3-hydroxypropanoate + NADP(+) = 3-oxopropanoate + NADPH + H(+). The enzyme catalyses L-allo-threonine + NADP(+) = aminoacetone + CO2 + NADPH. Its function is as follows. NADP-dependent dehydrogenase with broad substrate specificity acting on 3-hydroxy acids. Catalyzes the NADP-dependent oxidation of L-allo-threonine to L-2-amino-3-keto-butyrate, which is spontaneously decarboxylated into aminoacetone. Also acts on D-threonine, L-serine, D-serine, D-3-hydroxyisobutyrate, L-3-hydroxyisobutyrate, D-glycerate and L-glycerate. Able to catalyze the reduction of the malonic semialdehyde to 3-hydroxypropionic acid. YdfG is apparently supplementing RutE, the presumed malonic semialdehyde reductase involved in pyrimidine degradation since both are able to detoxify malonic semialdehyde. This is NADP-dependent 3-hydroxy acid dehydrogenase YdfG from Escherichia coli O157:H7.